A 61-amino-acid chain; its full sequence is LECHNQQSSQPPTTKTCPGETNCYKKVWRDHRGTIIERGCGCPTVKPGIKLNCCTTDKCNN.

4 disulfide bridges follow: C3-C23, C17-C40, C42-C53, and C54-C59.

This sequence belongs to the three-finger toxin family. Short-chain subfamily. Type I alpha-neurotoxin sub-subfamily. As to expression, expressed by the venom gland.

The protein localises to the secreted. Its function is as follows. Binds with high affinity to muscular nicotinic acetylcholine receptors (nAChRs) (tested on Torpedo marmorata AChR, Kd=0.07 nM) and with low affinity to neuronal alpha-7/CHRNA7 nAChRs (tested on chimeric receptor, Kd=3 uM) and inhibit acetylcholine from binding to the receptor, thereby impairing neuromuscular transmission. Produces peripheral paralysis by blocking neuromuscular transmission at the postsynaptic site. The protein is Short neurotoxin 1 of Naja pallida (Red spitting cobra).